The sequence spans 100 residues: MYB-like transcription factor TCL2 (100 aa).

Residues 37–74 (TEQEEDLIFRMHRLVGDRWDLIAGRVVGREAKDIERYW) form the Myb-like domain.

As to quaternary structure, interacts with GL3. Expressed in cotyledons, petioles, rosette leaves, hydathodes, cauline leaves, stems, pedicels and flower buds.

The protein resides in the nucleus. Its function is as follows. MYB-type transcription factor involved in trichome cell specification. Acts as a negative regulator of trichome patterning and formation. May function by suppressing the expression of GL3. The sequence is that of MYB-like transcription factor TCL2 (TCL2) from Arabidopsis thaliana (Mouse-ear cress).